A 209-amino-acid chain; its full sequence is High frequency lysogenization protein HflD homolog (209 aa).

This sequence belongs to the HflD family.

Its subcellular location is the cytoplasm. It localises to the cell inner membrane. This is High frequency lysogenization protein HflD homolog from Proteus mirabilis (strain HI4320).